The following is a 156-amino-acid chain: Ribosomal RNA large subunit methyltransferase H (156 aa).

S-adenosyl-L-methionine is bound by residues Leu73, Gly104, and 123 to 128 (LSDLTL).

Belongs to the RNA methyltransferase RlmH family. Homodimer.

The protein localises to the cytoplasm. The enzyme catalyses pseudouridine(1915) in 23S rRNA + S-adenosyl-L-methionine = N(3)-methylpseudouridine(1915) in 23S rRNA + S-adenosyl-L-homocysteine + H(+). In terms of biological role, specifically methylates the pseudouridine at position 1915 (m3Psi1915) in 23S rRNA. This Methylibium petroleiphilum (strain ATCC BAA-1232 / LMG 22953 / PM1) protein is Ribosomal RNA large subunit methyltransferase H.